The following is a 300-amino-acid chain: Small ribosomal subunit protein uS2 (300 aa).

The tract at residues 228–300 (RAGLSADKDA…PAAEAPSTEA (73 aa)) is disordered. A compositionally biased stretch (low complexity) spans 258–300 (AAPAAEAAPAAEAAPAAEAAPAAEAQAAPAAEAPAAEAPSTEA).

The protein belongs to the universal ribosomal protein uS2 family.

The polypeptide is Small ribosomal subunit protein uS2 (Rhodococcus jostii (strain RHA1)).